We begin with the raw amino-acid sequence, 72 residues long: Translation initiation factor IF-1 (72 aa).

In terms of domain architecture, S1-like spans 1–72 (MAKEDSIEMQ…TKGRIVFRAR (72 aa)).

The protein belongs to the IF-1 family. Component of the 30S ribosomal translation pre-initiation complex which assembles on the 30S ribosome in the order IF-2 and IF-3, IF-1 and N-formylmethionyl-tRNA(fMet); mRNA recruitment can occur at any time during PIC assembly.

It is found in the cytoplasm. One of the essential components for the initiation of protein synthesis. Stabilizes the binding of IF-2 and IF-3 on the 30S subunit to which N-formylmethionyl-tRNA(fMet) subsequently binds. Helps modulate mRNA selection, yielding the 30S pre-initiation complex (PIC). Upon addition of the 50S ribosomal subunit IF-1, IF-2 and IF-3 are released leaving the mature 70S translation initiation complex. In Idiomarina loihiensis (strain ATCC BAA-735 / DSM 15497 / L2-TR), this protein is Translation initiation factor IF-1.